The following is a 299-amino-acid chain: ATP phosphoribosyltransferase (299 aa).

Belongs to the ATP phosphoribosyltransferase family. Long subfamily. In terms of assembly, equilibrium between an active dimeric form, an inactive hexameric form and higher aggregates. Interconversion between the various forms is largely reversible and is influenced by the natural substrates and inhibitors of the enzyme. The cofactor is Mg(2+).

It is found in the cytoplasm. The catalysed reaction is 1-(5-phospho-beta-D-ribosyl)-ATP + diphosphate = 5-phospho-alpha-D-ribose 1-diphosphate + ATP. The protein operates within amino-acid biosynthesis; L-histidine biosynthesis; L-histidine from 5-phospho-alpha-D-ribose 1-diphosphate: step 1/9. Its activity is regulated as follows. Feedback inhibited by histidine. In terms of biological role, catalyzes the condensation of ATP and 5-phosphoribose 1-diphosphate to form N'-(5'-phosphoribosyl)-ATP (PR-ATP). Has a crucial role in the pathway because the rate of histidine biosynthesis seems to be controlled primarily by regulation of HisG enzymatic activity. This is ATP phosphoribosyltransferase from Edwardsiella ictaluri (strain 93-146).